The primary structure comprises 469 residues: 3-isopropylmalate dehydratase large subunit (469 aa).

3 residues coordinate [4Fe-4S] cluster: Cys-347, Cys-408, and Cys-411.

This sequence belongs to the aconitase/IPM isomerase family. LeuC type 1 subfamily. Heterodimer of LeuC and LeuD. It depends on [4Fe-4S] cluster as a cofactor.

It carries out the reaction (2R,3S)-3-isopropylmalate = (2S)-2-isopropylmalate. The protein operates within amino-acid biosynthesis; L-leucine biosynthesis; L-leucine from 3-methyl-2-oxobutanoate: step 2/4. Functionally, catalyzes the isomerization between 2-isopropylmalate and 3-isopropylmalate, via the formation of 2-isopropylmaleate. The protein is 3-isopropylmalate dehydratase large subunit of Histophilus somni (strain 129Pt) (Haemophilus somnus).